Here is an 85-residue protein sequence, read N- to C-terminus: Exodeoxyribonuclease 7 small subunit (85 aa).

This sequence belongs to the XseB family. In terms of assembly, heterooligomer composed of large and small subunits.

Its subcellular location is the cytoplasm. The catalysed reaction is Exonucleolytic cleavage in either 5'- to 3'- or 3'- to 5'-direction to yield nucleoside 5'-phosphates.. Its function is as follows. Bidirectionally degrades single-stranded DNA into large acid-insoluble oligonucleotides, which are then degraded further into small acid-soluble oligonucleotides. This chain is Exodeoxyribonuclease 7 small subunit, found in Alkalilimnicola ehrlichii (strain ATCC BAA-1101 / DSM 17681 / MLHE-1).